Consider the following 459-residue polypeptide: Cysteine--tRNA ligase (459 aa).

Residue C31 coordinates Zn(2+). The 'HIGH' region motif lies at 33 to 43 (PTVYDNPHIGN). 3 residues coordinate Zn(2+): C216, H241, and E245. Positions 274 to 278 (KMSKS) match the 'KMSKS' region motif. K277 contacts ATP.

The protein belongs to the class-I aminoacyl-tRNA synthetase family. As to quaternary structure, monomer. Zn(2+) is required as a cofactor.

It localises to the cytoplasm. The catalysed reaction is tRNA(Cys) + L-cysteine + ATP = L-cysteinyl-tRNA(Cys) + AMP + diphosphate. The chain is Cysteine--tRNA ligase from Rickettsia massiliae (strain Mtu5).